We begin with the raw amino-acid sequence, 217 residues long: Adenylate kinase (217 aa).

12 to 17 provides a ligand contact to ATP; that stretch reads GAGKGS. An NMP region spans residues 32-61; the sequence is STGDMFRTHIKGSTPLGLEAKKYTDQGLLV. Residues Thr-33, Arg-38, 59 to 61, 87 to 90, and Gln-94 each bind AMP; these read LLV and GYPR. Positions 128–165 are LID; it reads GRRTCPVCGAIYHVDNYPPKVAGICDNDGATLVQRKDD. ATP is bound at residue Arg-129. 2 residues coordinate Zn(2+): Cys-132 and Cys-135. 138–139 contributes to the ATP binding site; the sequence is IY. Zn(2+) contacts are provided by Cys-152 and Asp-155. Arg-162 and Arg-173 together coordinate AMP. Gln-201 lines the ATP pocket.

This sequence belongs to the adenylate kinase family. As to quaternary structure, monomer.

It localises to the cytoplasm. It carries out the reaction AMP + ATP = 2 ADP. It functions in the pathway purine metabolism; AMP biosynthesis via salvage pathway; AMP from ADP: step 1/1. In terms of biological role, catalyzes the reversible transfer of the terminal phosphate group between ATP and AMP. Plays an important role in cellular energy homeostasis and in adenine nucleotide metabolism. In Acholeplasma laidlawii (strain PG-8A), this protein is Adenylate kinase.